The following is a 191-amino-acid chain: Divergent paired-related homeobox (191 aa).

Positions 1-15 (MPGSEDLRKGKDQMH) are enriched in basic and acidic residues. The disordered stretch occupies residues 1-20 (MPGSEDLRKGKDQMHSHRKR). Residues 16 to 75 (SHRKRTMFTKKQLEDLNILFNENPYPNPSLQKEMASKIDIHPTVLQVWFKNHRAKLKKAK) constitute a DNA-binding region (homeobox).

The protein belongs to the paired homeobox family.

The protein localises to the nucleus. Transcription factor that acts as a repressor. The sequence is that of Divergent paired-related homeobox from Homo sapiens (Human).